A 144-amino-acid polypeptide reads, in one-letter code: Acylphosphatase-like protein MJ1331 (144 aa).

The Acylphosphatase-like domain occupies 8 to 100 (TYELRIYGNV…FPNGLNKIST (93 aa)).

The polypeptide is Acylphosphatase-like protein MJ1331 (Methanocaldococcus jannaschii (strain ATCC 43067 / DSM 2661 / JAL-1 / JCM 10045 / NBRC 100440) (Methanococcus jannaschii)).